A 167-amino-acid polypeptide reads, in one-letter code: Phospholipase A and acyltransferase 1 (167 aa).

Residues 1 to 138 (MAVNDCFSLT…GEGVSEQANR (138 aa)) are Cytoplasmic-facing. An LRAT domain is found at 20–135 (LIEVFRPCYQ…LRYGEGVSEQ (116 aa)). H30 is an active-site residue. C119 (acyl-thioester intermediate) is an active-site residue. A helical transmembrane segment spans residues 139 to 159 (AIGTIGLVAAGIDIFTFLGLF). The Lumenal segment spans residues 160 to 167 (PKRQGAKS).

Belongs to the H-rev107 family.

Its subcellular location is the membrane. The protein localises to the cytoplasm. The protein resides in the nucleus. The catalysed reaction is a 1,2-diacyl-sn-glycero-3-phosphocholine + H2O = a 1-acyl-sn-glycero-3-phosphocholine + a fatty acid + H(+). It catalyses the reaction a 1,2-diacyl-sn-glycero-3-phosphocholine + H2O = a 2-acyl-sn-glycero-3-phosphocholine + a fatty acid + H(+). The enzyme catalyses 1,2-dihexadecanoyl-sn-glycero-3-phosphocholine + H2O = 2-hexadecanoyl-sn-glycero-3-phosphocholine + hexadecanoate + H(+). It carries out the reaction 1,2-dihexadecanoyl-sn-glycero-3-phosphocholine + H2O = 1-hexadecanoyl-sn-glycero-3-phosphocholine + hexadecanoate + H(+). The catalysed reaction is 1-hexadecanoyl-2-(5Z,8Z,11Z,14Z-eicosatetraenoyl)-sn-glycero-3-phosphoethanolamine + H2O = 2-(5Z,8Z,11Z,14Z)-eicosatetraenoyl-sn-glycero-3-phosphoethanolamine + hexadecanoate + H(+). It catalyses the reaction 1-hexadecanoyl-2-(5Z,8Z,11Z,14Z-eicosatetraenoyl)-sn-glycero-3-phosphoethanolamine + H2O = 1-hexadecanoyl-sn-glycero-3-phosphoethanolamine + (5Z,8Z,11Z,14Z)-eicosatetraenoate + H(+). The enzyme catalyses 1,2-di-(9Z-octadecenoyl)-sn-glycero-3-phosphoethanolamine + 1,2-dihexadecanoyl-sn-glycero-3-phosphocholine = hexadecanoyl-sn-glycero-3-phosphocholine + N-hexadecanoyl-1,2-di-(9Z-octadecenoyl)-sn-glycero-3-phosphoethanolamine + H(+). It carries out the reaction 1,2-dihexadecanoyl-sn-glycero-3-phosphocholine + a 2-acyl-sn-glycero-3-phosphocholine = a 1-hexadecanoyl-2-acyl-sn-glycero-3-phosphocholine + 2-hexadecanoyl-sn-glycero-3-phosphocholine. Exhibits both phospholipase A1/2 and acyltransferase activities. Shows phospholipase A1 (PLA1) and A2 (PLA2) activity, catalyzing the calcium-independent release of fatty acids from the sn-1 or sn-2 position of glycerophospholipids. Shows O-acyltransferase activity, catalyzing the transfer of a fatty acyl group from glycerophospholipid to the hydroxyl group of lysophospholipid. The sequence is that of Phospholipase A and acyltransferase 1 from Rattus norvegicus (Rat).